The chain runs to 322 residues: Gluconeogenesis factor (322 aa).

This sequence belongs to the gluconeogenesis factor family.

The protein resides in the cytoplasm. In terms of biological role, required for morphogenesis under gluconeogenic growth conditions. In Listeria monocytogenes serovar 1/2a (strain ATCC BAA-679 / EGD-e), this protein is Gluconeogenesis factor.